Here is a 264-residue protein sequence, read N- to C-terminus: Ribosome-recycling factor, mitochondrial (264 aa).

It belongs to the RRF family.

The protein localises to the mitochondrion. Functionally, necessary for protein synthesis in mitochondria. Functions as a ribosome recycling factor in mitochondria. The sequence is that of Ribosome-recycling factor, mitochondrial (RRF1) from Yarrowia lipolytica (strain CLIB 122 / E 150) (Yeast).